The chain runs to 121 residues: Large ribosomal subunit protein bL19 (121 aa).

Belongs to the bacterial ribosomal protein bL19 family.

This protein is located at the 30S-50S ribosomal subunit interface and may play a role in the structure and function of the aminoacyl-tRNA binding site. The chain is Large ribosomal subunit protein bL19 from Chlorobaculum tepidum (strain ATCC 49652 / DSM 12025 / NBRC 103806 / TLS) (Chlorobium tepidum).